Consider the following 471-residue polypeptide: Putative ETHYLENE INSENSITIVE 3-like 4 protein (471 aa).

Residues 280 to 316 (DLKISEDQDDQESSGSKRKSESMEPSKSVYTCQNSSC) are disordered. The segment covering 304-316 (PSKSVYTCQNSSC) has biased composition (polar residues).

The protein belongs to the EIN3 family.

It localises to the nucleus. Its function is as follows. Putative transcription factor that may be involved in the ethylene response pathway. The chain is Putative ETHYLENE INSENSITIVE 3-like 4 protein (EIL4) from Arabidopsis thaliana (Mouse-ear cress).